Here is a 128-residue protein sequence, read N- to C-terminus: Aspartate 1-decarboxylase (128 aa).

The active-site Schiff-base intermediate with substrate; via pyruvic acid is the serine 25. Position 25 is a pyruvic acid (Ser) (serine 25). Threonine 57 contributes to the substrate binding site. Tyrosine 58 functions as the Proton donor in the catalytic mechanism. Substrate is bound at residue 73–75 (GAA).

The protein belongs to the PanD family. As to quaternary structure, heterooctamer of four alpha and four beta subunits. It depends on pyruvate as a cofactor. Post-translationally, is synthesized initially as an inactive proenzyme, which is activated by self-cleavage at a specific serine bond to produce a beta-subunit with a hydroxyl group at its C-terminus and an alpha-subunit with a pyruvoyl group at its N-terminus.

Its subcellular location is the cytoplasm. The catalysed reaction is L-aspartate + H(+) = beta-alanine + CO2. It functions in the pathway cofactor biosynthesis; (R)-pantothenate biosynthesis; beta-alanine from L-aspartate: step 1/1. Its function is as follows. Catalyzes the pyruvoyl-dependent decarboxylation of aspartate to produce beta-alanine. The chain is Aspartate 1-decarboxylase from Chlorobium luteolum (strain DSM 273 / BCRC 81028 / 2530) (Pelodictyon luteolum).